The chain runs to 314 residues: tRNA dimethylallyltransferase (314 aa).

Position 13-20 (13-20 (GPTAVGKT)) interacts with ATP. 15 to 20 (TAVGKT) is a substrate binding site. The interval 38-41 (DSMQ) is interaction with substrate tRNA.

This sequence belongs to the IPP transferase family. As to quaternary structure, monomer. Mg(2+) is required as a cofactor.

It carries out the reaction adenosine(37) in tRNA + dimethylallyl diphosphate = N(6)-dimethylallyladenosine(37) in tRNA + diphosphate. In terms of biological role, catalyzes the transfer of a dimethylallyl group onto the adenine at position 37 in tRNAs that read codons beginning with uridine, leading to the formation of N6-(dimethylallyl)adenosine (i(6)A). The sequence is that of tRNA dimethylallyltransferase from Bacillus licheniformis (strain ATCC 14580 / DSM 13 / JCM 2505 / CCUG 7422 / NBRC 12200 / NCIMB 9375 / NCTC 10341 / NRRL NRS-1264 / Gibson 46).